We begin with the raw amino-acid sequence, 272 residues long: Outer surface protein A (272 aa).

The N-terminal stretch at 1–16 is a signal peptide; the sequence is MKKYLLGIGLILALIA. Cysteine 17 carries N-palmitoyl cysteine lipidation. The S-diacylglycerol cysteine moiety is linked to residue cysteine 17.

This sequence belongs to the OspA lipoprotein family.

The protein localises to the cell outer membrane. The protein resides in the cell surface. The polypeptide is Outer surface protein A (Borreliella burgdorferi (Lyme disease spirochete)).